The sequence spans 102 residues: NADH-quinone oxidoreductase subunit K (102 aa).

Transmembrane regions (helical) follow at residues Leu5–Leu25, Ile31–Phe51, and Ile62–Leu82.

The protein belongs to the complex I subunit 4L family. In terms of assembly, NDH-1 is composed of 14 different subunits. Subunits NuoA, H, J, K, L, M, N constitute the membrane sector of the complex.

The protein resides in the cell inner membrane. The catalysed reaction is a quinone + NADH + 5 H(+)(in) = a quinol + NAD(+) + 4 H(+)(out). In terms of biological role, NDH-1 shuttles electrons from NADH, via FMN and iron-sulfur (Fe-S) centers, to quinones in the respiratory chain. The immediate electron acceptor for the enzyme in this species is believed to be ubiquinone. Couples the redox reaction to proton translocation (for every two electrons transferred, four hydrogen ions are translocated across the cytoplasmic membrane), and thus conserves the redox energy in a proton gradient. This Variovorax paradoxus (strain S110) protein is NADH-quinone oxidoreductase subunit K.